The sequence spans 1071 residues: Carbamoyl phosphate synthase large chain (1071 aa).

Residues 1–403 (MPKRTDLKSI…SFQKALRGLE (403 aa)) are carboxyphosphate synthetic domain. The 196-residue stretch at 133 to 328 (KEAMEKIGLS…IAKVAANWAV (196 aa)) folds into the ATP-grasp 1 domain. 11 residues coordinate ATP: arginine 169, glycine 175, glycine 176, glutamine 208, valine 210, glutamate 215, glycine 241, valine 242, histidine 243, glutamine 285, and glutamate 299. Residues glutamine 285, glutamate 299, and asparagine 301 each coordinate Mg(2+). Positions 285, 299, and 301 each coordinate Mn(2+). The tract at residues 404-548 (TGLCGFNPAR…YSTYEEECES (145 aa)) is oligomerization domain. The interval 549-930 (RPSDRKKVMI…AYYKAQLGAG (382 aa)) is carbamoyl phosphate synthetic domain. The ATP-grasp 2 domain occupies 673–864 (QKVLNDLGLR…LAKVGARCMA (192 aa)). Positions 709, 748, 750, 755, 780, 781, 782, 783, 823, and 835 each coordinate ATP. 3 residues coordinate Mg(2+): glutamine 823, glutamate 835, and asparagine 837. Mn(2+)-binding residues include glutamine 823, glutamate 835, and asparagine 837. The MGS-like domain maps to 931–1071 (ERLNPTGKIF…ELHGRLKNRN (141 aa)). The interval 931-1071 (ERLNPTGKIF…ELHGRLKNRN (141 aa)) is allosteric domain.

This sequence belongs to the CarB family. As to quaternary structure, composed of two chains; the small (or glutamine) chain promotes the hydrolysis of glutamine to ammonia, which is used by the large (or ammonia) chain to synthesize carbamoyl phosphate. Tetramer of heterodimers (alpha,beta)4. Mg(2+) serves as cofactor. It depends on Mn(2+) as a cofactor.

The catalysed reaction is hydrogencarbonate + L-glutamine + 2 ATP + H2O = carbamoyl phosphate + L-glutamate + 2 ADP + phosphate + 2 H(+). It carries out the reaction hydrogencarbonate + NH4(+) + 2 ATP = carbamoyl phosphate + 2 ADP + phosphate + 2 H(+). It functions in the pathway amino-acid biosynthesis; L-arginine biosynthesis; carbamoyl phosphate from bicarbonate: step 1/1. The protein operates within pyrimidine metabolism; UMP biosynthesis via de novo pathway; (S)-dihydroorotate from bicarbonate: step 1/3. In terms of biological role, large subunit of the glutamine-dependent carbamoyl phosphate synthetase (CPSase). CPSase catalyzes the formation of carbamoyl phosphate from the ammonia moiety of glutamine, carbonate, and phosphate donated by ATP, constituting the first step of 2 biosynthetic pathways, one leading to arginine and/or urea and the other to pyrimidine nucleotides. The large subunit (synthetase) binds the substrates ammonia (free or transferred from glutamine from the small subunit), hydrogencarbonate and ATP and carries out an ATP-coupled ligase reaction, activating hydrogencarbonate by forming carboxy phosphate which reacts with ammonia to form carbamoyl phosphate. This is Carbamoyl phosphate synthase large chain from Neisseria gonorrhoeae.